The chain runs to 599 residues: Elongation factor 4 (599 aa).

The tr-type G domain maps to 2-184; sequence KNIRNFSIIA…RLVRDIPPPE (183 aa). GTP is bound by residues 14–19 and 131–134; these read DHGKST and NKID.

The protein belongs to the TRAFAC class translation factor GTPase superfamily. Classic translation factor GTPase family. LepA subfamily.

The protein localises to the cell inner membrane. It carries out the reaction GTP + H2O = GDP + phosphate + H(+). Its function is as follows. Required for accurate and efficient protein synthesis under certain stress conditions. May act as a fidelity factor of the translation reaction, by catalyzing a one-codon backward translocation of tRNAs on improperly translocated ribosomes. Back-translocation proceeds from a post-translocation (POST) complex to a pre-translocation (PRE) complex, thus giving elongation factor G a second chance to translocate the tRNAs correctly. Binds to ribosomes in a GTP-dependent manner. The polypeptide is Elongation factor 4 (Shigella dysenteriae serotype 1 (strain Sd197)).